Here is a 216-residue protein sequence, read N- to C-terminus: U1 small nuclear ribonucleoprotein A (216 aa).

2 RRM domains span residues 7-86 and 142-216; these read QTIY…YSKS and QILF…FAKK. The tract at residues 97-142 is disordered; that stretch reads TFKERPKKVKPPKPAPGTDEKKDKKKKPSSAENSNPNAQTEQPPNQ. The span at 126–142 shows a compositional bias: polar residues; sequence SAENSNPNAQTEQPPNQ.

This sequence belongs to the RRM U1 A/B'' family. In terms of assembly, belongs to the spliceosome where it is associated with snRNP U1. Interacts with the SMN complex.

The protein resides in the nucleus. Functionally, binds stem loop II of U1 snRNA. It is the first snRNP to interact with pre-mRNA. This interaction is required for the subsequent binding of U2 snRNP and the U4/U6/U5 tri-snRNP. Plays a role in regulating sex-lethal splicing. The sequence is that of U1 small nuclear ribonucleoprotein A (snf) from Drosophila melanogaster (Fruit fly).